We begin with the raw amino-acid sequence, 274 residues long: Penicillin-insensitive murein endopeptidase (274 aa).

An N-terminal signal peptide occupies residues 1–19 (MNKTAIALLALLASSASLA). Disulfide bonds link Cys-44/Cys-265, Cys-187/Cys-235, and Cys-216/Cys-223. Zn(2+)-binding residues include His-110, His-113, Asp-120, Asp-147, His-150, and His-211. The interval 228 to 264 (LPPPGDGCGAELQSWFAPPKPGTTKPEKKTPSPLPPS) is disordered.

The protein belongs to the peptidase M74 family. In terms of assembly, dimer. The cofactor is Zn(2+).

The protein localises to the periplasm. In terms of biological role, murein endopeptidase that cleaves the D-alanyl-meso-2,6-diamino-pimelyl amide bond that connects peptidoglycan strands. Likely plays a role in the removal of murein from the sacculus. The sequence is that of Penicillin-insensitive murein endopeptidase from Escherichia coli (strain 55989 / EAEC).